Consider the following 234-residue polypeptide: Probable porphobilinogen deaminase (234 aa).

This sequence belongs to the HMBS family.

The enzyme catalyses 4 porphobilinogen + H2O = hydroxymethylbilane + 4 NH4(+). The protein operates within porphyrin-containing compound metabolism; protoporphyrin-IX biosynthesis; coproporphyrinogen-III from 5-aminolevulinate: step 2/4. Functionally, tetrapolymerization of the monopyrrole PBG into the hydroxymethylbilane pre-uroporphyrinogen in several discrete steps. In Chlamydia pneumoniae (Chlamydophila pneumoniae), this protein is Probable porphobilinogen deaminase (hemC).